Here is a 355-residue protein sequence, read N- to C-terminus: MIEAEEQQPCKTDFYSELPKVELHAHLNGSISSHTMKKLIAQKPDLKIHDQMTVIDKGKKRTLEECFQMFQTIHQLTSSPEDILMVTKDVIKEFADDGVKYLELRSTPRRENATGMTKKTYVESILEGIKQSKQENLDIDVRYLIAVDRRGGPLVAKETVKLAEEFFLSTEGTVLGLDLSGDPTVGQAKDFLEPLLEAKKAGLKLALHLSEIPNQKKETQILLDLLPDRIGHGTFLNSGEGGSLDLVDFVRQHRIPLELCLTSNVKSQTVPSYDQHHFGFWYSIAHPSVICTDDKGVFATHLSQEYQLAAETFNLTQSQVWDLSYESINYIFASDSTRSELRKKWNHLKPRVLHI.

Zn(2+) contacts are provided by His24 and His26. N(6)-methyl-AMP-binding positions include His26, Asn28, His74, 106–109 (STPR), Asp148, and Gly181. His208 provides a ligand contact to Zn(2+). N(6)-methyl-AMP contacts are provided by Glu211, Asp293, and Asp294. Glu211 serves as the catalytic Proton donor. A Zn(2+)-binding site is contributed by Asp293.

Belongs to the metallo-dependent hydrolases superfamily. Adenosine and AMP deaminases family. As to quaternary structure, monomer. Zn(2+) is required as a cofactor.

The enzyme catalyses N(6)-methyl-AMP + H2O + H(+) = IMP + methylamine. Its function is as follows. Catalyzes the hydrolysis of the free cytosolic methylated adenosine nucleotide N(6)-methyl-AMP (N6-mAMP) to produce inositol monophosphate (IMP) and methylamine. Is required for the catabolism of cytosolic N6-mAMP, which is derived from the degradation of mRNA containing N6-methylated adenine (m6A). Catalyzes the removal of different alkyl groups not only from N6-substituted purine or 2-aminopurine nucleoside monophosphates but also from O6-substituted compounds in vitro. In Homo sapiens (Human), this protein is N6-Methyl-AMP deaminase.